The primary structure comprises 116 residues: Integration host factor subunit alpha (116 aa).

2 disordered regions span residues 58–80 (FGNFQVRDKPPRPGRNPKTGETI) and 94–116 (QKLKSTVEQSGNPAEVSDDEAAE). A compositionally biased stretch (polar residues) spans 94 to 105 (QKLKSTVEQSGN).

Belongs to the bacterial histone-like protein family. In terms of assembly, heterodimer of an alpha and a beta chain.

Its function is as follows. This protein is one of the two subunits of integration host factor, a specific DNA-binding protein that functions in genetic recombination as well as in transcriptional and translational control. The protein is Integration host factor subunit alpha of Bordetella avium (strain 197N).